The primary structure comprises 793 residues: Translocase of chloroplast 90, chloroplastic (793 aa).

The disordered stretch occupies residues 22-59 (LGSDPFFRDPHQEQDNHSQAPAAPQPVTLSEPPCSTSS). Residues 27–37 (FFRDPHQEQDN) show a composition bias toward basic and acidic residues. Residues 130–157 (LIRAEESELKNVKLRQDRAKALAREQES) are a coiled coil. In terms of domain architecture, AIG1-type G spans 164–394 (DFSLRILVLG…FRDSIGLGQP (231 aa)). A G1 region spans residues 173–180 (GKTGVGKS). Residues 176-181 (GVGKSA) and 195-200 (DAFRPG) each bind GTP. S180 contacts Mg(2+). Residues 195–198 (DAFR) are homodimerization. Positions 199–203 (PGTDR) are G2. The segment at 220–223 (DTPG) is G3. The homodimerization stretch occupies residues 259 to 264 (RLDMID). A helical membrane pass occupies residues 279–297 (IFGAAIWLNTILVMTHSAA). The tract at residues 293 to 296 (THSA) is G4. GTP is bound by residues H294 and 341–342 (EN). Residues 341–343 (ENH) form a G5 region. 2 coiled-coil regions span residues 410–442 (LRRRLSSGADETEKEIDKLLNLDLEEEDEYDQL) and 477–503 (KKQLKEECRRRRDEKLVEEENLEDTEQ).

Belongs to the TRAFAC class TrmE-Era-EngA-EngB-Septin-like GTPase superfamily. AIG1/Toc34/Toc159-like paraseptin GTPase family. TOC159 subfamily. Homodimer. Part of the TOC core complex that includes 1 protein for the specific recognition of transit peptides surrounded by a ring composed of four proteins forming translocation channels, and four to five GTP-binding proteins providing energy. This core complex can interact with components of the TIC complex to form a larger import complex. Chloroplastic protein precursor such as prSS (precursor of the RuBisCO small subunit) interacts with these complexes. The TOC complex contains a specific subset of polar lipids such as digalactosyldiacylglyceride (DGDG), phosphatidylcholine (PC) and phosphatidylglycerol (PG). Interacts with TOC33 and TOC75. It depends on Mg(2+) as a cofactor. In terms of tissue distribution, expressed in seedlings, leaves, flowers, and roots.

The protein localises to the plastid. Its subcellular location is the chloroplast outer membrane. The protein resides in the cytoplasm. Its function is as follows. GTPase involved in protein precursor import into chloroplasts. Seems to recognize chloroplast-destined precursor proteins and regulate their presentation to the translocation channel through GTP hydrolysis. Probably specialized in the import of nuclear encoded photosynthetic preproteins from the cytoplasm to the chloroplast. The protein is Translocase of chloroplast 90, chloroplastic (TOC90) of Arabidopsis thaliana (Mouse-ear cress).